Here is a 383-residue protein sequence, read N- to C-terminus: UDP-N-acetylglucosamine 2-epimerase (383 aa).

It belongs to the UDP-N-acetylglucosamine 2-epimerase family.

The catalysed reaction is UDP-N-acetyl-alpha-D-glucosamine = UDP-N-acetyl-alpha-D-mannosamine. The protein operates within capsule biogenesis; capsule polysaccharide biosynthesis. Its function is as follows. Non-hydrolyzing C2-epimerase involved in the biosynthesis of capsular polysaccharides. Catalyzes the C2 epimerization of UDP-N-acetylglucosamine (UDP-GlcNAc) to form UDP-N-acetylmannosamine (UDP-ManNAc). The protein is UDP-N-acetylglucosamine 2-epimerase of Campylobacter jejuni.